Consider the following 975-residue polypeptide: C-1-tetrahydrofolate synthase, mitochondrial (975 aa).

A mitochondrion-targeting transit peptide spans 1-34 (MLSRLSLLSNSRAFQQARWRIYRLKVSPTVHASQ). Residues 35 to 343 (YHILSGRKLA…KPLPLHLESP (309 aa)) form a methylenetetrahydrofolate dehydrogenase and cyclohydrolase region. Residues 83 to 87 (YVRMK) and 130 to 132 (IQL) contribute to the substrate site. NADP(+) is bound by residues 201–203 (GRS) and S226. 301 to 305 (PGGVG) contributes to the substrate binding site. The tract at residues 344–975 (VPSDIDISRA…DDDGEIEGLF (632 aa)) is formyltetrahydrofolate synthetase. 408–415 (TPLGEGKS) provides a ligand contact to ATP.

It in the N-terminal section; belongs to the tetrahydrofolate dehydrogenase/cyclohydrolase family. This sequence in the C-terminal section; belongs to the formate--tetrahydrofolate ligase family. In terms of assembly, homodimer.

It is found in the mitochondrion. The enzyme catalyses (6R)-5,10-methylene-5,6,7,8-tetrahydrofolate + NADP(+) = (6R)-5,10-methenyltetrahydrofolate + NADPH. It catalyses the reaction (6R)-5,10-methenyltetrahydrofolate + H2O = (6R)-10-formyltetrahydrofolate + H(+). The catalysed reaction is (6S)-5,6,7,8-tetrahydrofolate + formate + ATP = (6R)-10-formyltetrahydrofolate + ADP + phosphate. Its pathway is one-carbon metabolism; tetrahydrofolate interconversion. In terms of biological role, mitochondrial isozyme of C-1-tetrahydrofolate synthase. The trifunctional enzyme catalyzes the interconversion of the one-carbon derivatives of tetrahydrofolate (THF) between different oxidation states by the enzymatic activities 10-formyltetrahydrofolate synthetase, 5,lO-methenyltetrahydrofolate cyclohydrolase, and 5,lO-methylenetetrahydrofolate dehydrogenase. This Saccharomyces cerevisiae (strain ATCC 204508 / S288c) (Baker's yeast) protein is C-1-tetrahydrofolate synthase, mitochondrial.